Reading from the N-terminus, the 196-residue chain is GTP cyclohydrolase-2 (196 aa).

49–53 (RVHSE) contributes to the GTP binding site. Residues Cys54, Cys65, and Cys67 each contribute to the Zn(2+) site. Residues Gln70, 92 to 94 (EGR), and Thr114 contribute to the GTP site. The active-site Proton acceptor is Asp126. The active-site Nucleophile is Arg128. The GTP site is built by Thr149 and Lys154.

Belongs to the GTP cyclohydrolase II family. Homodimer. Zn(2+) is required as a cofactor.

The enzyme catalyses GTP + 4 H2O = 2,5-diamino-6-hydroxy-4-(5-phosphoribosylamino)-pyrimidine + formate + 2 phosphate + 3 H(+). It participates in cofactor biosynthesis; riboflavin biosynthesis; 5-amino-6-(D-ribitylamino)uracil from GTP: step 1/4. Functionally, catalyzes the conversion of GTP to 2,5-diamino-6-ribosylamino-4(3H)-pyrimidinone 5'-phosphate (DARP), formate and pyrophosphate. This is GTP cyclohydrolase-2 from Citrobacter koseri (strain ATCC BAA-895 / CDC 4225-83 / SGSC4696).